Here is a 415-residue protein sequence, read N- to C-terminus: MNNELIIKGKKAKEASYTLSFASTNEKDNGLLKISEFLIKRCDEILEENKKDLEKAIEKGTSNAMLDRLKLDEERVKSIANAVADVVKLDDPIGEVTSMFKRPNGLRIGVQRVPLGVVGIIYEARPNVTADAAALCLKTGNAVILRGGSEAINSNLKIVEIISDALKEAGLPEGSVQILEDTSRETATDFMRLNDYLDVLIPRGGAGLIKAVVNNATVPVIETGVGNCHIYIDDEADINMGVDIIVNAKTSRPAVCNAAEKLLVNEKIAEEFLPVAIKALKEKGVEIRGCEKTKAIVNDINLATEEDWGKEYLDYILGVKVVKDLDEAISHINKYGTKHSESIVTKNYFNSEKFLQRVDAAAVYVNASTRFTDGGEFGFGAEIGISTQKLHARGPMGLKELTTNKYIIYGNGQIR.

The protein belongs to the gamma-glutamyl phosphate reductase family.

The protein localises to the cytoplasm. It catalyses the reaction L-glutamate 5-semialdehyde + phosphate + NADP(+) = L-glutamyl 5-phosphate + NADPH + H(+). It functions in the pathway amino-acid biosynthesis; L-proline biosynthesis; L-glutamate 5-semialdehyde from L-glutamate: step 2/2. In terms of biological role, catalyzes the NADPH-dependent reduction of L-glutamate 5-phosphate into L-glutamate 5-semialdehyde and phosphate. The product spontaneously undergoes cyclization to form 1-pyrroline-5-carboxylate. This chain is Gamma-glutamyl phosphate reductase, found in Clostridium perfringens (strain 13 / Type A).